A 2196-amino-acid polypeptide reads, in one-letter code: Non-reducing polyketide synthase CTB1 (2196 aa).

The N-terminal acylcarrier protein transacylase domain (SAT) stretch occupies residues 11 to 250; it reads AFGDQTYDCS…TRLPITAPYH (240 aa). Positions 381–814 constitute a Ketosynthase family 3 (KS3) domain; sequence KSPIAILAAS…GGNTCLVLED (434 aa). Catalysis depends on for beta-ketoacyl synthase activity residues cysteine 553, histidine 688, and histidine 733. The interval 922–1223 is malonyl-CoA:ACP transacylase (MAT) domain; that stretch reads AFTGQGSAFA…QTFASINKDK (302 aa). The segment at 1298 to 1611 is product template (PT) domain; the sequence is SSSIHKVITN…VPKRLMHYIV (314 aa). Positions 1302–1441 are N-terminal hotdog fold; sequence HKVITNTITA…EKTALKSAAL (140 aa). In terms of domain architecture, PKS/mFAS DH spans 1302–1608; the sequence is HKVITNTITA…LQGVPKRLMH (307 aa). The Proton acceptor; for dehydratase activity role is filled by histidine 1335. Residues 1460 to 1608 form a C-terminal hotdog fold region; it reads TYRFSKGMIY…LQGVPKRLMH (149 aa). Aspartate 1520 serves as the catalytic Proton donor; for dehydratase activity. The disordered stretch occupies residues 1617–1666; the sequence is KASGPPTEKKTSSPPVEKKASAPVAPTRPAIQRKNASIPPPATQVTPQNK. A compositionally biased stretch (basic and acidic residues) spans 1623–1636; sequence TEKKTSSPPVEKKA. 2 consecutive Carrier domains span residues 1671–1748 and 1775–1857; these read PSVS…TRLS and DPSP…SGST. Residues serine 1708 and serine 1816 each carry the O-(pantetheine 4'-phosphoryl)serine modification. A compositionally biased stretch (polar residues) spans 1856–1867; sequence STESFDSTTTKP. A disordered region spans residues 1856–1923; the sequence is STESFDSTTT…PPKGRIPPAW (68 aa). The span at 1872–1887 shows a compositional bias: low complexity; the sequence is ATPPLTDSSASSPPSS. Residues 1937 to 2187 are thioesterase (TE) domain; the sequence is ILFLFPDGAG…SGAQMLVEHM (251 aa).

Requires pantetheine 4'-phosphate as cofactor.

The enzyme catalyses 6 malonyl-CoA + acetyl-CoA + 6 H(+) = nor-toralactone + 6 CO2 + 7 CoA + 2 H2O. Its pathway is mycotoxin biosynthesis. Its function is as follows. Polyketide synthase; part of the gene cluster that mediates the biosynthesis of cercosporin, a light-activated, non-host-selective toxin. The perylenequinone chromophore of cercosporin absorbs light energy to attain an electronically-activated triplet state and produces active oxygen species such as the hydroxyl radical, superoxide, hydrogen peroxide or singlet oxygen upon reaction with oxygen molecules. These reactive oxygen species cause damage to various cellular components including lipids, proteins and nucleic acids. The first step of cercosporin biosynthesis is performed by the polyketide synthase CTB1 which catalyzes the formation of nor-toralactone. The starter unit acyltransferase (SAT) domain of CTB1 initiates polyketide extension by the selective utilization of acetyl-CoA, which is elongated to the heptaketide in the beta-ketoacyl synthase (KS) domain by successive condensations with six malonyl units introduced by the malonyl acyltransferase (MAT) domain. The product template (PT) domain catalyzes C4-C9 and C2-C11 aldol cyclizations and dehydrations to a trihydroxynaphthalene, which is thought to be delivered to the thioesterase (TE) domain for product release. The bifunctional enzyme CTB3 then methylates nor-toralactone to toralactone before conducting an unusual oxidative aromatic ring opening. The O-methyltransferase CTB2 further methylates the nascent OH-6 of the CBT3 product, blocking further oxidation at this site before the reductase CTB6 reduces the 2-oxopropyl ketone at position C7, giving naphthalene. The FAD-dependent monooxygenase CTB5 in concert with the multicopper oxidase CTB12 are responsible for homodimerization of naphthalene with CTB7 installing the dioxepine moiety, finally producing cercosporin. The fasciclin domain-containing protein CTB11 might act with CTB5 and CTB12 whereas the roles of CTB9 and CTB10 have still to be elucidated. This chain is Non-reducing polyketide synthase CTB1, found in Cercospora nicotianae (Barn spot disease fungus).